The primary structure comprises 521 residues: Maturase K (521 aa).

Belongs to the intron maturase 2 family. MatK subfamily.

Its subcellular location is the plastid. It is found in the chloroplast. Usually encoded in the trnK tRNA gene intron. Probably assists in splicing its own and other chloroplast group II introns. This Kniphofia uvaria (Red-hot poker) protein is Maturase K.